We begin with the raw amino-acid sequence, 245 residues long: 3-deoxy-manno-octulosonate cytidylyltransferase (245 aa).

This sequence belongs to the KdsB family.

It localises to the cytoplasm. The catalysed reaction is 3-deoxy-alpha-D-manno-oct-2-ulosonate + CTP = CMP-3-deoxy-beta-D-manno-octulosonate + diphosphate. The protein operates within nucleotide-sugar biosynthesis; CMP-3-deoxy-D-manno-octulosonate biosynthesis; CMP-3-deoxy-D-manno-octulosonate from 3-deoxy-D-manno-octulosonate and CTP: step 1/1. Its pathway is bacterial outer membrane biogenesis; lipopolysaccharide biosynthesis. Functionally, activates KDO (a required 8-carbon sugar) for incorporation into bacterial lipopolysaccharide in Gram-negative bacteria. The sequence is that of 3-deoxy-manno-octulosonate cytidylyltransferase from Acaryochloris marina (strain MBIC 11017).